The sequence spans 701 residues: Cytosolic endo-beta-N-acetylglucosaminidase 2 (701 aa).

The protein belongs to the glycosyl hydrolase 85 family.

The protein resides in the cytoplasm. Its subcellular location is the cytosol. The catalysed reaction is an N(4)-(oligosaccharide-(1-&gt;3)-[oligosaccharide-(1-&gt;6)]-beta-D-Man-(1-&gt;4)-beta-D-GlcNAc-(1-&gt;4)-alpha-D-GlcNAc)-L-asparaginyl-[protein] + H2O = an oligosaccharide-(1-&gt;3)-[oligosaccharide-(1-&gt;6)]-beta-D-Man-(1-&gt;4)-D-GlcNAc + N(4)-(N-acetyl-beta-D-glucosaminyl)-L-asparaginyl-[protein]. Its function is as follows. Endoglycosidase that releases N-glycans from glycoproteins by cleaving the beta-1,4-glycosidic bond in the N,N'-diacetylchitobiose core. Involved in the production of high-mannose type N-glycans during plant development and fruit maturation. The polypeptide is Cytosolic endo-beta-N-acetylglucosaminidase 2 (Arabidopsis thaliana (Mouse-ear cress)).